Reading from the N-terminus, the 554-residue chain is CTP synthase (554 aa).

The interval 1–265 (MTPLIFVTGG…DELVIDQFKL (265 aa)) is amidoligase domain. Position 13 (Ser-13) interacts with CTP. A UTP-binding site is contributed by Ser-13. ATP contacts are provided by residues 14–19 (SLGKGI) and Asp-71. Mg(2+)-binding residues include Asp-71 and Glu-139. CTP is bound by residues 146–148 (DIE), 186–191 (KTKPTQ), and Lys-222. UTP is bound by residues 186-191 (KTKPTQ) and Lys-222. Residues 292–545 (NIAVVGKYVD…VRAAREKKAG (254 aa)) form the Glutamine amidotransferase type-1 domain. An L-glutamine-binding site is contributed by Gly-353. The Nucleophile; for glutamine hydrolysis role is filled by Cys-380. Residues 381–384 (YGMQ), Glu-404, and Arg-471 contribute to the L-glutamine site. Catalysis depends on residues His-518 and Glu-520.

The protein belongs to the CTP synthase family. Homotetramer.

It carries out the reaction UTP + L-glutamine + ATP + H2O = CTP + L-glutamate + ADP + phosphate + 2 H(+). It catalyses the reaction L-glutamine + H2O = L-glutamate + NH4(+). The catalysed reaction is UTP + NH4(+) + ATP = CTP + ADP + phosphate + 2 H(+). It functions in the pathway pyrimidine metabolism; CTP biosynthesis via de novo pathway; CTP from UDP: step 2/2. Allosterically activated by GTP, when glutamine is the substrate; GTP has no effect on the reaction when ammonia is the substrate. The allosteric effector GTP functions by stabilizing the protein conformation that binds the tetrahedral intermediate(s) formed during glutamine hydrolysis. Inhibited by the product CTP, via allosteric rather than competitive inhibition. Its function is as follows. Catalyzes the ATP-dependent amination of UTP to CTP with either L-glutamine or ammonia as the source of nitrogen. Regulates intracellular CTP levels through interactions with the four ribonucleotide triphosphates. This Xanthomonas axonopodis pv. citri (strain 306) protein is CTP synthase.